Reading from the N-terminus, the 654-residue chain is uncharacterized protein (654 aa).

Positions 1–13 (MSNLILTPSNNGT) are enriched in polar residues. The segment at 1–23 (MSNLILTPSNNGTERPYRSRKTR) is disordered. The zn(2)-C6 fungal-type DNA-binding region spans 25 to 54 (CDNCRLRKSRCVVESIGNPCLLCTQLKIPC). The tract at residues 63-96 (RNKQKKQQDSVSDDTPSEATTTTNDDRDPKYNAL) is disordered.

It is found in the cytoplasm. It localises to the nucleus. This is an uncharacterized protein from Schizosaccharomyces pombe (strain 972 / ATCC 24843) (Fission yeast).